Here is a 497-residue protein sequence, read N- to C-terminus: Serine hydroxymethyltransferase (497 aa).

(6S)-5,6,7,8-tetrahydrofolate is bound by residues leucine 176 and 180–182 (GHL). Lysine 289 carries the N6-(pyridoxal phosphate)lysine modification. Residue glutamate 306 participates in (6S)-5,6,7,8-tetrahydrofolate binding.

The protein belongs to the SHMT family. As to quaternary structure, homodimer. The cofactor is pyridoxal 5'-phosphate.

Its subcellular location is the cytoplasm. The enzyme catalyses (6R)-5,10-methylene-5,6,7,8-tetrahydrofolate + glycine + H2O = (6S)-5,6,7,8-tetrahydrofolate + L-serine. It participates in one-carbon metabolism; tetrahydrofolate interconversion. The protein operates within amino-acid biosynthesis; glycine biosynthesis; glycine from L-serine: step 1/1. In terms of biological role, catalyzes the reversible interconversion of serine and glycine with tetrahydrofolate (THF) serving as the one-carbon carrier. This reaction serves as the major source of one-carbon groups required for the biosynthesis of purines, thymidylate, methionine, and other important biomolecules. Also exhibits THF-independent aldolase activity toward beta-hydroxyamino acids, producing glycine and aldehydes, via a retro-aldol mechanism. The protein is Serine hydroxymethyltransferase of Chlamydia pneumoniae (Chlamydophila pneumoniae).